A 164-amino-acid chain; its full sequence is Probable calcium-binding protein CML17 (164 aa).

EF-hand domains are found at residues 4–39 (DQQA…LGMP), 40–75 (VHRE…VMRV), 88–123 (VDEA…LGIK), and 126–161 (RTAE…GAFA). Positions 17, 19, 21, 23, 28, 53, 55, 57, 59, 64, 101, 103, 105, 112, 139, 141, 143, 145, and 150 each coordinate Ca(2+).

In terms of biological role, potential calcium sensor. This Oryza sativa subsp. japonica (Rice) protein is Probable calcium-binding protein CML17 (CML17).